A 272-amino-acid chain; its full sequence is Ribosomal RNA small subunit methyltransferase A (272 aa).

The S-adenosyl-L-methionine site is built by asparagine 18, leucine 20, glycine 45, glutamate 66, aspartate 91, and asparagine 113.

This sequence belongs to the class I-like SAM-binding methyltransferase superfamily. rRNA adenine N(6)-methyltransferase family. RsmA subfamily.

It is found in the cytoplasm. The catalysed reaction is adenosine(1518)/adenosine(1519) in 16S rRNA + 4 S-adenosyl-L-methionine = N(6)-dimethyladenosine(1518)/N(6)-dimethyladenosine(1519) in 16S rRNA + 4 S-adenosyl-L-homocysteine + 4 H(+). Functionally, specifically dimethylates two adjacent adenosines (A1518 and A1519) in the loop of a conserved hairpin near the 3'-end of 16S rRNA in the 30S particle. May play a critical role in biogenesis of 30S subunits. The protein is Ribosomal RNA small subunit methyltransferase A of Pectobacterium atrosepticum (strain SCRI 1043 / ATCC BAA-672) (Erwinia carotovora subsp. atroseptica).